Reading from the N-terminus, the 338-residue chain is Protein UL141 (338 aa).

The first 25 residues, 1-25, serve as a signal peptide directing secretion; sequence MCRRESLRTLPWLFWVLLSCPRLLE. Residues 37-278 lie on the Extracellular side of the membrane; it reads DIAEKMWAEN…DTGMSPWATR (242 aa). 3 N-linked (GlcNAc...) asparagine; by host glycosylation sites follow: Asn117, Asn132, and Asn147. Residues 279–299 form a helical membrane-spanning segment; sequence GIAAFLGFWSIFTVCFLCYLC. The Cytoplasmic portion of the chain corresponds to 300 to 338; that stretch reads YLQCCGHWCPTPGRGRRGGEGYRRLPTYDSYPGVKKMKR.

As to quaternary structure, interacts with human PVR. Interacts with human TNFRSF10A and TNFRSF10B. Forms a homodimer that engages two TNFRSF10B monomers.

The protein localises to the host endoplasmic reticulum membrane. Functionally, evasion of NK cell killing. Blocks surface expression of PVR which is a ligand for NK cell-activating receptors. Binds human PVR in the endoplasmic reticulum and prevents its maturation and transport to the cell surface. Targets also the natural killer cell activating ligand NECTIN2 for proteasome-mediated degradation. Additionally promotes intracellular retention of TNFRSF10A/TRAIL-R1 and TNFRSF10B/TRAIL-R2 and thus down-regulates their cell surface expression. This is Protein UL141 (UL141) from Human cytomegalovirus (strain Merlin) (HHV-5).